Here is a 39-residue protein sequence, read N- to C-terminus: Natriuretic peptide TNPc (39 aa).

Residues cysteine 9 and cysteine 25 are joined by a disulfide bond.

Belongs to the natriuretic peptide family. Expressed by the venom gland.

The protein resides in the secreted. In terms of biological role, snake venom natriuretic peptide that exhibits vasoactive and hypotensive activity. Produces a near complete relaxation in pre-contracted aortae by activating the natriuretic peptide receptor 1 (NPR1). Stimulates cGMP production through the natriuretic peptide receptor 1 (NPR1) with high potencies for the rat NPR1 (EC(50)=100 nM), and very weak potencies over human NPR1 (28% activation at 10 uM). In vivo, reduces both systolic and diastolic blood pressure with no effect on heart rate, when intravenously injected in conscious rabbits. Also enhances the bradycardia due to cardiac afferent stimulation (Bezold-Jarisch reflex). The chain is Natriuretic peptide TNPc from Oxyuranus microlepidotus (Inland taipan).